Reading from the N-terminus, the 291-residue chain is Small ribosomal subunit protein uS3 (291 aa).

The KH type-2 domain occupies I39–K110.

This sequence belongs to the universal ribosomal protein uS3 family. In terms of assembly, part of the 30S ribosomal subunit. Forms a tight complex with proteins S10 and S14.

In terms of biological role, binds the lower part of the 30S subunit head. Binds mRNA in the 70S ribosome, positioning it for translation. The chain is Small ribosomal subunit protein uS3 from Borreliella afzelii (strain PKo) (Borrelia afzelii).